A 128-amino-acid polypeptide reads, in one-letter code: Small ribosomal subunit protein uS9 (128 aa).

The protein belongs to the universal ribosomal protein uS9 family.

The protein is Small ribosomal subunit protein uS9 of Cytophaga hutchinsonii (strain ATCC 33406 / DSM 1761 / CIP 103989 / NBRC 15051 / NCIMB 9469 / D465).